The sequence spans 201 residues: Recombination protein RecR (201 aa).

A C4-type zinc finger spans residues 60–75 (CSVCGNVDTIDPCSIC). The Toprim domain maps to 83-178 (ATIIVVEDIA…KVTRLAHGVP (96 aa)).

This sequence belongs to the RecR family.

May play a role in DNA repair. It seems to be involved in an RecBC-independent recombinational process of DNA repair. It may act with RecF and RecO. The protein is Recombination protein RecR of Bartonella henselae (strain ATCC 49882 / DSM 28221 / CCUG 30454 / Houston 1) (Rochalimaea henselae).